The sequence spans 426 residues: METFCLKVTFWVALVGYVIGDHPESYSTNLSTPVDFTTFHGTELSFLVTTHRPTNLALPSNGSMHSYCPQQTKITSAFKYINTVISCTIFIVGMVGNATLLRIIYQNKCMRNGPNALIASLALGDLIYVVIDLPINVFKLLAGRWPFDHNDFGVFLCKLFPFLQKSSVGITVLNLCALSVDRYRAVASWSRVQGIGIPLITAIEIVSIWILSFILAIPEAIGFVMVPFEYKGEQHKTCMLNATSKFMEFYQDVKDWWLFGFYFCMPLVCTAIFYTLMTCEMLNRRNGSLRIALSEHLKQRREVAKTVFCLVVIFALCWFPLHLSRILKKTVYDEMDKNRCELLSFLRLMDYIGINLATMNSCINPIALYFVSKKFKNCFQSCLCCCCYQSKSLMTSVPMNGTSIQWKNHEQNNHNTERSSHKDSIN.

Positions 1 to 20 (METFCLKVTFWVALVGYVIG) are cleaved as a signal peptide. Residues 21–79 (DHPESYSTNLSTPVDFTTFHGTELSFLVTTHRPTNLALPSNGSMHSYCPQQTKITSAFK) are Extracellular-facing. N29 and N61 each carry an N-linked (GlcNAc...) asparagine glycan. A helical transmembrane segment spans residues 80-101 (YINTVISCTIFIVGMVGNATLL). Residues 102-111 (RIIYQNKCMR) are Cytoplasmic-facing. The helical transmembrane segment at 112–131 (NGPNALIASLALGDLIYVVI) threads the bilayer. Over 132–158 (DLPINVFKLLAGRWPFDHNDFGVFLCK) the chain is Extracellular. C157 and C238 are oxidised to a cystine. The helical transmembrane segment at 159–180 (LFPFLQKSSVGITVLNLCALSV) threads the bilayer. The Cytoplasmic segment spans residues 181–204 (DRYRAVASWSRVQGIGIPLITAIE). A helical membrane pass occupies residues 205–228 (IVSIWILSFILAIPEAIGFVMVPF). Residues 229–255 (EYKGEQHKTCMLNATSKFMEFYQDVKD) are Extracellular-facing. N-linked (GlcNAc...) asparagine glycosylation occurs at N241. A helical membrane pass occupies residues 256–277 (WWLFGFYFCMPLVCTAIFYTLM). The Cytoplasmic segment spans residues 278 to 305 (TCEMLNRRNGSLRIALSEHLKQRREVAK). A helical transmembrane segment spans residues 306 to 327 (TVFCLVVIFALCWFPLHLSRIL). The Extracellular portion of the chain corresponds to 328–346 (KKTVYDEMDKNRCELLSFL). The chain crosses the membrane as a helical span at residues 347 to 371 (RLMDYIGINLATMNSCINPIALYFV). Residues 372–426 (SKKFKNCFQSCLCCCCYQSKSLMTSVPMNGTSIQWKNHEQNNHNTERSSHKDSIN) are Cytoplasmic-facing. Residue S424 is modified to Phosphoserine.

This sequence belongs to the G-protein coupled receptor 1 family. Endothelin receptor subfamily. EDNRA sub-subfamily. Interacts with HDAC7 and KAT5.

The protein localises to the cell membrane. Its function is as follows. Receptor for endothelin-1. Mediates its action by association with G proteins that activate a phosphatidylinositol-calcium second messenger system. The rank order of binding affinities for ET-A is: ET1 &gt; ET2 &gt;&gt; ET3. This is Endothelin-1 receptor from Canis lupus familiaris (Dog).